Reading from the N-terminus, the 416-residue chain is MATTASLHLHLHLLLSSSRRRCRLLVPRAHTDSISTGRRRFIADTATASAAAAVGPLVLPRTPLARADQPPSLSEWERVLLPIDPGVVLLDIAFVPDDPSHGFLLGTRQTILETKNGGNTWFPRSIPSAEDEDFNYRFNSVSFMGKEGWIIGKPAILLHTSDAGDSWERIPLSAQLPGNMVYIKATGEQSAEMVTDEGAIYVTSNRGYNWKAAVQETVSATLNRTVSSGISGASYYTGTFNTVNRSPDGRYVAVSSRGNFYLTWEPGQPFWQPHNRAVARRIQNMGWRADGGLWLLVRGGGLFLSKGSGFQFFYRGLNDAHAISYLHPPNQITEDFEEASVQSRGFGILDVGYRSKDEAWAAGGSGVLLKTTNGGKTWVRDKAADNIAANLYSVKFLGDNKGYVLGNDGVLLRYVG.

The N-terminal 36 residues, Met1 to Thr36, are a transit peptide targeting the chloroplast. A thylakoid-targeting transit peptide spans Gly37–Ala67.

The protein belongs to the Ycf48 family.

It localises to the plastid. Its subcellular location is the chloroplast thylakoid lumen. Essential for photosystem II (PSII) biogenesis; required for assembly of an early intermediate in PSII assembly that includes D2 (psbD) and cytochrome b559. This Oryza sativa subsp. japonica (Rice) protein is Photosystem II stability/assembly factor HCF136, chloroplastic (HCF136).